The sequence spans 202 residues: LexA repressor (202 aa).

Residues 28–48 (IAEIARAIGVSSPHGVREQLR) constitute a DNA-binding region (H-T-H motif). Catalysis depends on for autocatalytic cleavage activity residues serine 120 and lysine 157.

The protein belongs to the peptidase S24 family. As to quaternary structure, homodimer.

It carries out the reaction Hydrolysis of Ala-|-Gly bond in repressor LexA.. Its function is as follows. Represses a number of genes involved in the response to DNA damage (SOS response), including recA and lexA. In the presence of single-stranded DNA, RecA interacts with LexA causing an autocatalytic cleavage which disrupts the DNA-binding part of LexA, leading to derepression of the SOS regulon and eventually DNA repair. The sequence is that of LexA repressor from Methylococcus capsulatus (strain ATCC 33009 / NCIMB 11132 / Bath).